Here is a 100-residue protein sequence, read N- to C-terminus: MAKKSMIAREVKRKKLVKKYSAKRKALLDEFNAAKDPMERLEIHRKIQGLPRNSAPNRVRNRCWATGKPRGVYRDFGLCRNQLRQRAHNGELPGVVKSSW.

The protein belongs to the universal ribosomal protein uS14 family. Part of the 30S ribosomal subunit. Contacts proteins S3 and S10.

Functionally, binds 16S rRNA, required for the assembly of 30S particles and may also be responsible for determining the conformation of the 16S rRNA at the A site. The sequence is that of Small ribosomal subunit protein uS14 from Prochlorococcus marinus (strain AS9601).